We begin with the raw amino-acid sequence, 200 residues long: Large ribosomal subunit protein bL25 (200 aa).

This sequence belongs to the bacterial ribosomal protein bL25 family. CTC subfamily. In terms of assembly, part of the 50S ribosomal subunit; part of the 5S rRNA/L5/L18/L25 subcomplex. Contacts the 5S rRNA. Binds to the 5S rRNA independently of L5 and L18.

Functionally, this is one of the proteins that binds to the 5S RNA in the ribosome where it forms part of the central protuberance. The chain is Large ribosomal subunit protein bL25 from Leifsonia xyli subsp. xyli (strain CTCB07).